We begin with the raw amino-acid sequence, 294 residues long: Elongation factor Ts (294 aa).

The involved in Mg(2+) ion dislocation from EF-Tu stretch occupies residues 79–82; it reads TDFV.

This sequence belongs to the EF-Ts family.

Its subcellular location is the cytoplasm. Its function is as follows. Associates with the EF-Tu.GDP complex and induces the exchange of GDP to GTP. It remains bound to the aminoacyl-tRNA.EF-Tu.GTP complex up to the GTP hydrolysis stage on the ribosome. The polypeptide is Elongation factor Ts (Shouchella clausii (strain KSM-K16) (Alkalihalobacillus clausii)).